A 379-amino-acid chain; its full sequence is Cytochrome b (379 aa).

4 consecutive transmembrane segments (helical) span residues 33–53, 77–98, 113–133, and 178–198; these read FGSLLGVCLMIQILTGLFLAM, WLIRYLHANGASMFFICLFIHV, WNIGIILFLTTMATAFVGYVL, and FFAFHFILPFIITAFALVHLL. Residues H83 and H97 each contribute to the heme b site. Heme b is bound by residues H182 and H196. H201 is a binding site for a ubiquinone. The next 4 helical transmembrane spans lie at 226 to 246, 288 to 308, 320 to 340, and 347 to 367; these read IKDLLGILLLLLALMILALFF, LGGVLALILSILILAAFPLLN, ITQTIYWTLIVNLLVLTWIGG, and FTTIGQIASITYFTTIIILMP.

It belongs to the cytochrome b family. In terms of assembly, the cytochrome bc1 complex contains 11 subunits: 3 respiratory subunits (MT-CYB, CYC1 and UQCRFS1), 2 core proteins (UQCRC1 and UQCRC2) and 6 low-molecular weight proteins (UQCRH/QCR6, UQCRB/QCR7, UQCRQ/QCR8, UQCR10/QCR9, UQCR11/QCR10 and a cleavage product of UQCRFS1). This cytochrome bc1 complex then forms a dimer. Heme b is required as a cofactor.

It is found in the mitochondrion inner membrane. In terms of biological role, component of the ubiquinol-cytochrome c reductase complex (complex III or cytochrome b-c1 complex) that is part of the mitochondrial respiratory chain. The b-c1 complex mediates electron transfer from ubiquinol to cytochrome c. Contributes to the generation of a proton gradient across the mitochondrial membrane that is then used for ATP synthesis. The protein is Cytochrome b (MT-CYB) of Akodon aerosus (Highland grass mouse).